The primary structure comprises 263 residues: Troponin T, slow skeletal muscle (263 aa).

Over residues 1 to 38 (MSDAEEQEYEEEQPEEEEAAEEEEEAPEEPEPAAEPEE) the composition is skewed to acidic residues. 2 disordered regions span residues 1–64 (MSDA…RVDF) and 109–154 (AERA…KKKV). Ser2 bears the Phosphoserine; by CK2 mark. A compositionally biased stretch (pro residues) spans 44–56 (SRPVVPPLIPPKI). Positions 109–150 (AERAEQQRFRTEKERERQAKLAEEKMRKEEEEAKKRAEDDAK) are enriched in basic and acidic residues.

Belongs to the troponin T family. In terms of assembly, interacts with TPM3. As to expression, expressed dominantly in slow muscles, like masseter, diaphragm, psoas major and spinnalis. Isoform 2 is also expressed in fast muscles.

Its function is as follows. Troponin T is the tropomyosin-binding subunit of troponin, the thin filament regulatory complex which confers calcium-sensitivity to striated muscle actomyosin ATPase activity. This Bos taurus (Bovine) protein is Troponin T, slow skeletal muscle (TNNT1).